The following is a 69-amino-acid chain: Cold shock protein CapB (69 aa).

The region spanning 7-66 (GTVKWFNDEKGFGFITPQSGDDLFVHFKAIQSDGFKSLKEGQQVSFIATRGQKGMQAEEV) is the CSD domain.

The protein resides in the cytoplasm. Affects cell viability at low temperatures. This is Cold shock protein CapB (capB) from Pseudomonas fragi.